The primary structure comprises 320 residues: Cytochrome f (320 aa).

Residues 1-35 (MQTRNAFSYIKEEITRSISVLLVIYIIIRAPISNA) form the signal peptide. Positions 36, 56, 59, and 60 each coordinate heme. The chain crosses the membrane as a helical span at residues 286–305 (VQGLLFFLASIIFAQIFLVL).

It belongs to the cytochrome f family. The 4 large subunits of the cytochrome b6-f complex are cytochrome b6, subunit IV (17 kDa polypeptide, petD), cytochrome f and the Rieske protein, while the 4 small subunits are PetG, PetL, PetM and PetN. The complex functions as a dimer. Requires heme as cofactor.

The protein resides in the plastid. The protein localises to the chloroplast thylakoid membrane. Functionally, component of the cytochrome b6-f complex, which mediates electron transfer between photosystem II (PSII) and photosystem I (PSI), cyclic electron flow around PSI, and state transitions. This chain is Cytochrome f, found in Lotus japonicus (Lotus corniculatus var. japonicus).